Here is a 186-residue protein sequence, read N- to C-terminus: ATP synthase subunit delta (186 aa).

Belongs to the ATPase delta chain family. As to quaternary structure, F-type ATPases have 2 components, F(1) - the catalytic core - and F(0) - the membrane proton channel. F(1) has five subunits: alpha(3), beta(3), gamma(1), delta(1), epsilon(1). F(0) has three main subunits: a(1), b(2) and c(10-14). The alpha and beta chains form an alternating ring which encloses part of the gamma chain. F(1) is attached to F(0) by a central stalk formed by the gamma and epsilon chains, while a peripheral stalk is formed by the delta and b chains.

It localises to the cell inner membrane. Functionally, f(1)F(0) ATP synthase produces ATP from ADP in the presence of a proton or sodium gradient. F-type ATPases consist of two structural domains, F(1) containing the extramembraneous catalytic core and F(0) containing the membrane proton channel, linked together by a central stalk and a peripheral stalk. During catalysis, ATP synthesis in the catalytic domain of F(1) is coupled via a rotary mechanism of the central stalk subunits to proton translocation. In terms of biological role, this protein is part of the stalk that links CF(0) to CF(1). It either transmits conformational changes from CF(0) to CF(1) or is implicated in proton conduction. This chain is ATP synthase subunit delta, found in Leptospira borgpetersenii serovar Hardjo-bovis (strain JB197).